A 193-amino-acid polypeptide reads, in one-letter code: Probable GTP-binding protein EngB (193 aa).

Residues 22 to 193 form the EngB-type G domain; sequence QLPEFALAGR…EAWGALQKWM (172 aa). Residues 30–37, 57–61, 75–78, 142–145, and 174–176 contribute to the GTP site; these read GRSNVGKS, GKTQT, DVPG, TKAD, and FSA. Mg(2+)-binding residues include S37 and T59.

It belongs to the TRAFAC class TrmE-Era-EngA-EngB-Septin-like GTPase superfamily. EngB GTPase family. The cofactor is Mg(2+).

Its function is as follows. Necessary for normal cell division and for the maintenance of normal septation. The protein is Probable GTP-binding protein EngB of Anoxybacillus flavithermus (strain DSM 21510 / WK1).